The chain runs to 91 residues: Acylphosphatase (91 aa).

An Acylphosphatase-like domain is found at 4 to 91 (RYLIKVLGRV…DNEKSFKIVY (88 aa)). Active-site residues include Arg19 and Asn37.

It belongs to the acylphosphatase family.

The enzyme catalyses an acyl phosphate + H2O = a carboxylate + phosphate + H(+). The sequence is that of Acylphosphatase (acyP) from Clostridium acetobutylicum (strain ATCC 824 / DSM 792 / JCM 1419 / IAM 19013 / LMG 5710 / NBRC 13948 / NRRL B-527 / VKM B-1787 / 2291 / W).